The chain runs to 194 residues: Gonadal protein gdl (194 aa).

This sequence belongs to the gonadal family. In stage 6-14 egg chamber nurse cells and oocytes of adult females and spermatocyte cysts and bundles of maturing sperm of larval, pupal and adult males.

In Drosophila melanogaster (Fruit fly), this protein is Gonadal protein gdl (gdl).